The sequence spans 884 residues: MNIPTKFTTSKIRSDFLEFFKNKGHKIVPSAPLVPGNDPTLLFTNSGMVQFKDVFLGAEKRSEVRVADVQCCLRAGGKHNDLDSVGYTARHHTFFEMLGNWSFGDYFKKEAITWAWELLTHVWELPPERLLVTVYRTDDESYALWRDMVGVPEDRIVRIGDNKGAPFASDNFWQMADTGPCGPCTEIFYDHGEHIPGGPPGSPGEDGDRFIEIWNLVFMQFDRQSDGTLVPLPTPCVDTGMGLERLAAILQHVHTNYEIDLFQTLILKAAELTAVADVQNKSLCVIADHSRACAFLIVDGVLPSNEGRGYVLRRIIRRALRHGWMLGVRQPFFNNMVPTLVAVMGDAYPKLQAAAESVMRTLLAEEERFAETLDVGMKIFNEVAAKVANGVIPGSDAFRLYDTYGFPVDLTADIARERGMRVDMAGFEAAMTQQRKTARAAGKFGRGVQLSAERAAMLSPTVFLGYEQLQADGLRVVALLSDGGLTDSASVGDEVIVLTDRTPFYAESGGQVGDIGTLMASDGVRLEVTDTQKLMGQFHGHVTRIVQGGVKVGDVLSGSVAVARRKMVALNHSATHLLHCALRSVFGTHVAQKGSLVAPDRLRFDFSHFEPISAAQMTLIERMVNDEVRANHLVMIEQMGMQAALDAGAMALFGEKYGEHVRVVKMGTSVELCGGTHITRTGDIGLFKIISECGVSSGVRRIEAVTGESALNHVLAEEHRLYEVAGLIGSNANDVVNHIRQLTDRQKTLERELEKLKGKLISGTITDLLSTAVNVADVKVVAARLDGLDGKALREALDRLKLQLSDAVIVLAGVTGGKVALVTAVNGPRAMGKVKADTLLSHVATQINGRGGGRVDFAQGGGEDGPSLRSALDGVATWVKQHLD.

Zn(2+) contacts are provided by His572, His576, Cys673, and His677.

It belongs to the class-II aminoacyl-tRNA synthetase family. Zn(2+) serves as cofactor.

The protein localises to the cytoplasm. The catalysed reaction is tRNA(Ala) + L-alanine + ATP = L-alanyl-tRNA(Ala) + AMP + diphosphate. In terms of biological role, catalyzes the attachment of alanine to tRNA(Ala) in a two-step reaction: alanine is first activated by ATP to form Ala-AMP and then transferred to the acceptor end of tRNA(Ala). Also edits incorrectly charged Ser-tRNA(Ala) and Gly-tRNA(Ala) via its editing domain. The polypeptide is Alanine--tRNA ligase (Xylella fastidiosa (strain M12)).